The chain runs to 169 residues: Nucleoside-triphosphatase THEP1 (169 aa).

Residues 11 to 18 and 100 to 107 contribute to the ATP site; these read GEPGVGKT and IIGIDEIG.

Belongs to the THEP1 NTPase family.

The catalysed reaction is a ribonucleoside 5'-triphosphate + H2O = a ribonucleoside 5'-diphosphate + phosphate + H(+). Functionally, has nucleotide phosphatase activity towards ATP, GTP, CTP, TTP and UTP. May hydrolyze nucleoside diphosphates with lower efficiency. This chain is Nucleoside-triphosphatase THEP1, found in Sulfurisphaera tokodaii (strain DSM 16993 / JCM 10545 / NBRC 100140 / 7) (Sulfolobus tokodaii).